The primary structure comprises 117 residues: Large ribosomal subunit protein eL18 (117 aa).

Belongs to the eukaryotic ribosomal protein eL18 family.

The sequence is that of Large ribosomal subunit protein eL18 from Archaeoglobus fulgidus (strain ATCC 49558 / DSM 4304 / JCM 9628 / NBRC 100126 / VC-16).